The chain runs to 362 residues: UDP-N-acetylglucosamine--N-acetylmuramyl-(pentapeptide) pyrophosphoryl-undecaprenol N-acetylglucosamine transferase (362 aa).

UDP-N-acetyl-alpha-D-glucosamine contacts are provided by residues 11 to 13 (TGG), Asn124, Arg163, Ser191, Ile246, and Gln291.

Belongs to the glycosyltransferase 28 family. MurG subfamily.

It is found in the cell inner membrane. The catalysed reaction is di-trans,octa-cis-undecaprenyl diphospho-N-acetyl-alpha-D-muramoyl-L-alanyl-D-glutamyl-meso-2,6-diaminopimeloyl-D-alanyl-D-alanine + UDP-N-acetyl-alpha-D-glucosamine = di-trans,octa-cis-undecaprenyl diphospho-[N-acetyl-alpha-D-glucosaminyl-(1-&gt;4)]-N-acetyl-alpha-D-muramoyl-L-alanyl-D-glutamyl-meso-2,6-diaminopimeloyl-D-alanyl-D-alanine + UDP + H(+). Its pathway is cell wall biogenesis; peptidoglycan biosynthesis. Functionally, cell wall formation. Catalyzes the transfer of a GlcNAc subunit on undecaprenyl-pyrophosphoryl-MurNAc-pentapeptide (lipid intermediate I) to form undecaprenyl-pyrophosphoryl-MurNAc-(pentapeptide)GlcNAc (lipid intermediate II). In Idiomarina loihiensis (strain ATCC BAA-735 / DSM 15497 / L2-TR), this protein is UDP-N-acetylglucosamine--N-acetylmuramyl-(pentapeptide) pyrophosphoryl-undecaprenol N-acetylglucosamine transferase.